Reading from the N-terminus, the 587-residue chain is Hatching enzyme (587 aa).

The first 18 residues, 1–18, serve as a signal peptide directing secretion; sequence MANSGLILLVMFMIHVTT. Residues 19–166 constitute a propeptide, activation peptide; the sequence is VHNVPLPSTA…PRCGVPDVLP (148 aa). N-linked (GlcNAc...) asparagine glycosylation is found at Asn64, Asn126, and Asn141. The short motif at 157–164 is the Cysteine switch element; it reads PRCGVPDV. 2 residues coordinate Zn(2+): Cys159 and His283. Residue Glu284 is part of the active site. Positions 287 and 293 each coordinate Zn(2+). The interval 325–382 is disordered; the sequence is LYGSNSGSGTTTTTRRPTTTRATTTRRTTTTRATTTRATTTTTTSPSRPSPPRRACSG. Positions 334–371 are enriched in low complexity; that stretch reads TTTTTRRPTTTRATTTRRTTTTRATTTRATTTTTTSPS. The cysteines at positions 380 and 582 are disulfide-linked. Hemopexin repeat units follow at residues 381 to 422, 425 to 468, 469 to 513, and 518 to 570; these read SGSF…RFGF, PQNI…WVGL, PCNI…FNDV, and HDGV…IPQC. Residue Asn584 is glycosylated (N-linked (GlcNAc...) asparagine).

The protein belongs to the peptidase M10A family. Zn(2+) is required as a cofactor.

It carries out the reaction Hydrolysis of proteins of the fertilization envelope and dimethylcasein.. In terms of biological role, allows the sea urchin to digest the protective envelope derived from the egg extracellular matrix; thus allowing the sea urchin to swim freely. The polypeptide is Hatching enzyme (Paracentrotus lividus (Common sea urchin)).